Here is a 119-residue protein sequence, read N- to C-terminus: Holo-[acyl-carrier-protein] synthase (119 aa).

Asp-8 and Glu-59 together coordinate Mg(2+).

The protein belongs to the P-Pant transferase superfamily. AcpS family. The cofactor is Mg(2+).

It is found in the cytoplasm. It carries out the reaction apo-[ACP] + CoA = holo-[ACP] + adenosine 3',5'-bisphosphate + H(+). Functionally, transfers the 4'-phosphopantetheine moiety from coenzyme A to a Ser of acyl-carrier-protein. The polypeptide is Holo-[acyl-carrier-protein] synthase (Staphylococcus aureus (strain JH1)).